The primary structure comprises 941 residues: DNA mismatch repair protein MutS (941 aa).

613 to 620 (GPNMAGKS) contributes to the ATP binding site.

Belongs to the DNA mismatch repair MutS family.

This protein is involved in the repair of mismatches in DNA. It is possible that it carries out the mismatch recognition step. This protein has a weak ATPase activity. This is DNA mismatch repair protein MutS from Clostridium botulinum (strain Alaska E43 / Type E3).